The sequence spans 463 residues: MELRLYDTLTRDKRPFTPIDPANVRMYVCGPTVYDFAHIGNARPVIVFDVLFRLLRHLYGEAHVKYVRNITDVDDKINDRAARDYPGLPLNEAIRKVTEQTERQFHDDVDALGCLRPTVEPRATEHIGEMRSIIEKLVAGGFAYVEQDHVLFSPSAMNAANGVLPRYGSLANRSLDEMIAGARVDVAPYKRDATDFVLWKPSKPGEPSWPSPAGIATPGRPGWHIECSAMSWKHLGETFDIHGGGIDLVFPHHENEVAQSCCAFHTERMAQTWMHNGFLQVEGEKMSKSLGNFITIRELLATNKFGGRSWDGATLRLAMLKTHYRQPIDWTVDALHEAEKAILDWSDFAKDATPVRCDEVIAALTDDLNTPKMIAELHALRRAGKADELRGAMQLLGINPVVRAPVDLDATAKSLIEARTAARANKDWKESDRIRDELAAMGVVLKDGKDADGKSVTTWELAR.

Cys29 serves as a coordination point for Zn(2+). The short motif at Pro31–Asn41 is the 'HIGH' region element. Zn(2+) contacts are provided by Cys227, His252, and Glu256. Positions Lys285–Ser289 match the 'KMSKS' region motif. Lys288 contacts ATP.

It belongs to the class-I aminoacyl-tRNA synthetase family. In terms of assembly, monomer. It depends on Zn(2+) as a cofactor.

It is found in the cytoplasm. It catalyses the reaction tRNA(Cys) + L-cysteine + ATP = L-cysteinyl-tRNA(Cys) + AMP + diphosphate. This chain is Cysteine--tRNA ligase, found in Rhodopseudomonas palustris (strain ATCC BAA-98 / CGA009).